The chain runs to 185 residues: UPF0397 protein lhv_0999 (185 aa).

5 helical membrane-spanning segments follow: residues 11 to 31, 45 to 65, 72 to 92, 111 to 131, and 145 to 165; these read VVAM…TSIP, FLAL…GFIG, IMYG…GLII, ILLF…VVAP, and VFVQ…VVGT.

The protein belongs to the UPF0397 family.

The protein resides in the cell membrane. The chain is UPF0397 protein lhv_0999 from Lactobacillus helveticus (strain DPC 4571).